Reading from the N-terminus, the 826-residue chain is G-protein coupled receptor-associated sorting protein 2 (826 aa).

Disordered regions lie at residues Met1 to Trp126, Trp204 to Cys286, Glu336 to Arg371, and Ile506 to Ala534. Basic and acidic residues predominate over residues Lys13–Glu31. Positions Ser59–Gly73 are enriched in polar residues. Residues Thr231–Thr247 are compositionally biased toward basic and acidic residues. The span at Arg248–Arg264 shows a compositional bias: basic residues. A phosphoserine mark is found at Ser275 and Ser277.

It belongs to the GPRASP family. Interacts with cytoplasmic tails of a variety of G-protein coupled receptors such as muscarinic acetylcholine receptor M1/CHRM1 and calcitonin receptor/CALCR. Strongly expressed in the brain and the cochlea. Also in lung and muscle tissues. Localized in multiple structures of the cochlea, detected in the spiral ganglion, stria vascularis, spiral ligament, inner and outer hair cells.

Its function is as follows. May play a role in regulation of a variety of G-protein coupled receptors. This Mus musculus (Mouse) protein is G-protein coupled receptor-associated sorting protein 2 (Gprasp2).